A 505-amino-acid chain; its full sequence is L-carnitine/gamma-butyrobetaine antiporter (505 aa).

The next 12 membrane-spanning stretches (helical) occupy residues 10-30, 50-70, 92-112, 143-163, 195-215, 231-251, 263-283, 316-336, 347-367, 403-423, 446-466, and 475-495; these read IEPK…WLTV, IWGW…FWLV, IFMM…SIEI, GPLP…FFFV, FYLV…TPLV, LDAI…ACGL, SYLS…SFIM, WTVF…IFLA, LCFG…TVLG, LSTA…VTLI, LLVR…LLAL, and AIIA…LSFI.

It belongs to the BCCT transporter (TC 2.A.15) family. CaiT subfamily. In terms of assembly, homotrimer.

Its subcellular location is the cell inner membrane. It catalyses the reaction 4-(trimethylamino)butanoate(in) + (R)-carnitine(out) = 4-(trimethylamino)butanoate(out) + (R)-carnitine(in). It participates in amine and polyamine metabolism; carnitine metabolism. Its function is as follows. Catalyzes the exchange of L-carnitine for gamma-butyrobetaine. The sequence is that of L-carnitine/gamma-butyrobetaine antiporter from Salmonella arizonae (strain ATCC BAA-731 / CDC346-86 / RSK2980).